A 500-amino-acid polypeptide reads, in one-letter code: Tyrosine decarboxylase 2 (500 aa).

Repeat copies occupy residues glutamate 65 to glutamate 122 and valine 125 to serine 176. The tract at residues glutamate 65–serine 176 is 2 X approximate tandem repeats. Substrate is bound at residue serine 89. Residues alanine 153 and serine 154 each contribute to the pyridoxal 5'-phosphate site. Substrate is bound at residue histidine 189. Threonine 248 and asparagine 302 together coordinate pyridoxal 5'-phosphate. At lysine 305 the chain carries N6-(pyridoxal phosphate)lysine.

The protein belongs to the group II decarboxylase family. It depends on pyridoxal 5'-phosphate as a cofactor. As to expression, mostly expressed in bulbs, and, to a lower extent, in stems, roots, leaves and flowers.

It carries out the reaction L-tyrosine + H(+) = tyramine + CO2. It participates in alkaloid biosynthesis. Its function is as follows. Catalyzes the decarboxylation of L-tyrosine to tyramine, which is converted to norbelladine, a precursor to all Amaryllidaceae alkaloids such as galanthamine, lycorine and haemanthamine, and including haemanthamine- and crinamine-type alkaloids, promising anticancer agents. The polypeptide is Tyrosine decarboxylase 2 (Narcissus pseudonarcissus (Daffodil)).